Reading from the N-terminus, the 659-residue chain is Biosynthetic arginine decarboxylase (659 aa).

Lys-128 is subject to N6-(pyridoxal phosphate)lysine. 308–318 provides a ligand contact to substrate; the sequence is FDVGGGLGVDY.

The protein belongs to the Orn/Lys/Arg decarboxylase class-II family. SpeA subfamily. It depends on Mg(2+) as a cofactor. The cofactor is pyridoxal 5'-phosphate.

It catalyses the reaction L-arginine + H(+) = agmatine + CO2. It functions in the pathway amine and polyamine biosynthesis; agmatine biosynthesis; agmatine from L-arginine: step 1/1. In terms of biological role, catalyzes the biosynthesis of agmatine from arginine. This is Biosynthetic arginine decarboxylase from Yersinia pestis.